A 490-amino-acid polypeptide reads, in one-letter code: Probable cytosol aminopeptidase (490 aa).

Residues Lys262 and Asp267 each contribute to the Mn(2+) site. Lys274 is a catalytic residue. Asp285, Asp344, and Glu346 together coordinate Mn(2+). Arg348 is an active-site residue.

The protein belongs to the peptidase M17 family. Mn(2+) is required as a cofactor.

The protein resides in the cytoplasm. It carries out the reaction Release of an N-terminal amino acid, Xaa-|-Yaa-, in which Xaa is preferably Leu, but may be other amino acids including Pro although not Arg or Lys, and Yaa may be Pro. Amino acid amides and methyl esters are also readily hydrolyzed, but rates on arylamides are exceedingly low.. It catalyses the reaction Release of an N-terminal amino acid, preferentially leucine, but not glutamic or aspartic acids.. In terms of biological role, presumably involved in the processing and regular turnover of intracellular proteins. Catalyzes the removal of unsubstituted N-terminal amino acids from various peptides. The sequence is that of Probable cytosol aminopeptidase from Xanthomonas oryzae pv. oryzae (strain MAFF 311018).